A 140-amino-acid polypeptide reads, in one-letter code: Phosphoribosyl-AMP cyclohydrolase (140 aa).

A Mg(2+)-binding site is contributed by Asp78. Cys79 provides a ligand contact to Zn(2+). Mg(2+)-binding residues include Asp80 and Asp82. Positions 96 and 103 each coordinate Zn(2+).

It belongs to the PRA-CH family. In terms of assembly, homodimer. Mg(2+) is required as a cofactor. It depends on Zn(2+) as a cofactor.

Its subcellular location is the cytoplasm. The enzyme catalyses 1-(5-phospho-beta-D-ribosyl)-5'-AMP + H2O = 1-(5-phospho-beta-D-ribosyl)-5-[(5-phospho-beta-D-ribosylamino)methylideneamino]imidazole-4-carboxamide. The protein operates within amino-acid biosynthesis; L-histidine biosynthesis; L-histidine from 5-phospho-alpha-D-ribose 1-diphosphate: step 3/9. Functionally, catalyzes the hydrolysis of the adenine ring of phosphoribosyl-AMP. In Ralstonia pickettii (strain 12J), this protein is Phosphoribosyl-AMP cyclohydrolase.